The sequence spans 958 residues: Translation initiation factor IF-2 (958 aa).

The segment covering 50-67 has biased composition (low complexity); sequence FKPAAAPKVEAKPAAPKV. Disordered stretches follow at residues 50 to 224 and 288 to 374; these read FKPA…RIDF and EVVP…HELP. Composition is skewed to basic and acidic residues over residues 68 to 89, 96 to 118, and 138 to 153; these read SAEK…EEAK, SAEK…EAKP, and FKAE…AERR. Residues 157-169 are compositionally biased toward low complexity; sequence KGNNRDQQQNGNR. Basic and acidic residues-rich tracts occupy residues 185 to 195 and 290 to 323; these read RDNRRFNDQAK and VPEK…DGPR. Low complexity predominate over residues 337–346; it reads NQKNSNWNNN. The span at 365-374 shows a compositional bias: basic and acidic residues; it reads VTERKFHELP. The tr-type G domain maps to 460-627; sequence ERPPVVTIMG…TVLLVAEIQE (168 aa). A G1 region spans residues 469–476; it reads GHVDHGKT. 469-476 is a binding site for GTP; that stretch reads GHVDHGKT. The tract at residues 494-498 is G2; it reads GITQH. Residues 515 to 518 are G3; the sequence is DTPG. GTP-binding positions include 515-519 and 569-572; these read DTPGH and NKID. Residues 569–572 are G4; it reads NKID. The segment at 605–607 is G5; sequence SAK.

The protein belongs to the TRAFAC class translation factor GTPase superfamily. Classic translation factor GTPase family. IF-2 subfamily.

It localises to the cytoplasm. Its function is as follows. One of the essential components for the initiation of protein synthesis. Protects formylmethionyl-tRNA from spontaneous hydrolysis and promotes its binding to the 30S ribosomal subunits. Also involved in the hydrolysis of GTP during the formation of the 70S ribosomal complex. This is Translation initiation factor IF-2 from Streptococcus pneumoniae serotype 4 (strain ATCC BAA-334 / TIGR4).